We begin with the raw amino-acid sequence, 228 residues long: Small ribosomal subunit protein uS3 (228 aa).

In terms of domain architecture, KH type-2 spans isoleucine 39 to lysine 107.

Belongs to the universal ribosomal protein uS3 family. In terms of assembly, part of the 30S ribosomal subunit. Forms a tight complex with proteins S10 and S14.

Functionally, binds the lower part of the 30S subunit head. Binds mRNA in the 70S ribosome, positioning it for translation. The protein is Small ribosomal subunit protein uS3 of Hydrogenovibrio crunogenus (strain DSM 25203 / XCL-2) (Thiomicrospira crunogena).